We begin with the raw amino-acid sequence, 379 residues long: Cytochrome b (379 aa).

Helical transmembrane passes span 33-53 (FGSL…FLAM), 77-98 (WLIR…YLHI), 113-133 (WNIG…GYVL), and 178-198 (FFAF…IHLL). Residues histidine 83 and histidine 97 each coordinate heme b. Heme b contacts are provided by histidine 182 and histidine 196. An a ubiquinone-binding site is contributed by histidine 201. A run of 4 helical transmembrane segments spans residues 226–246 (YKDL…ALFY), 288–308 (LGGV…PILH), 320–340 (ASQL…WIGG), and 347–367 (YIII…VLNP).

Belongs to the cytochrome b family. As to quaternary structure, the cytochrome bc1 complex contains 3 respiratory subunits (MT-CYB, CYC1 and UQCRFS1), 2 core proteins (UQCRC1 and UQCRC2) and probably 6 low-molecular weight proteins. Heme b serves as cofactor.

It localises to the mitochondrion inner membrane. Component of the ubiquinol-cytochrome c reductase complex (complex III or cytochrome b-c1 complex) that is part of the mitochondrial respiratory chain. The b-c1 complex mediates electron transfer from ubiquinol to cytochrome c. Contributes to the generation of a proton gradient across the mitochondrial membrane that is then used for ATP synthesis. This Anguilla dieffenbachii (New Zealand longfin eel) protein is Cytochrome b (mt-cyb).